Reading from the N-terminus, the 92-residue chain is UPF0223 protein SP_1404 (92 aa).

It belongs to the UPF0223 family.

The sequence is that of UPF0223 protein SP_1404 from Streptococcus pneumoniae serotype 4 (strain ATCC BAA-334 / TIGR4).